Reading from the N-terminus, the 433-residue chain is Histidinol dehydrogenase (433 aa).

Residues Y129, Q191, and N214 each coordinate NAD(+). Positions 237, 259, and 262 each coordinate substrate. Zn(2+) contacts are provided by Q259 and H262. Catalysis depends on proton acceptor residues E326 and H327. The substrate site is built by H327, D360, E414, and H419. D360 provides a ligand contact to Zn(2+). H419 lines the Zn(2+) pocket.

The protein belongs to the histidinol dehydrogenase family. Zn(2+) serves as cofactor.

The enzyme catalyses L-histidinol + 2 NAD(+) + H2O = L-histidine + 2 NADH + 3 H(+). It functions in the pathway amino-acid biosynthesis; L-histidine biosynthesis; L-histidine from 5-phospho-alpha-D-ribose 1-diphosphate: step 9/9. Its function is as follows. Catalyzes the sequential NAD-dependent oxidations of L-histidinol to L-histidinaldehyde and then to L-histidine. The protein is Histidinol dehydrogenase of Methanosarcina barkeri (strain Fusaro / DSM 804).